Here is a 74-residue protein sequence, read N- to C-terminus: Molt-inhibiting hormone (74 aa).

Residue Q1 is modified to Pyrrolidone carboxylic acid. 3 cysteine pairs are disulfide-bonded: C7-C43, C23-C39, and C26-C52. Position 72 is a valine amide (V72).

The protein resides in the secreted. Inhibits Y-organs where molting hormone (ecdysteroid) is secreted. A molting cycle is initiated when MIH secretion diminishes or stops. In Procambarus bouvieri (Mexican crayfish), this protein is Molt-inhibiting hormone.